The following is a 917-amino-acid chain: Transcriptional regulatory protein SEF1 (917 aa).

The segment at 1 to 88 is disordered; sequence MKFEKGKVRI…SKPTGHRPVT (88 aa). Pro residues predominate over residues 13-27; the sequence is KPSPTPTNPQTPLPL. The span at 56–70 shows a compositional bias: low complexity; sequence SNSTASTPNSATPTS. Over residues 71 to 81 the composition is skewed to polar residues; it reads VGTPPQKTSKP. The zn(2)-C6 fungal-type DNA-binding region spans 90-120; the sequence is CTFCRQHKIKCNASDNYPNPCERCKKMGLKC. The stretch at 129–164 forms a coiled coil; the sequence is RKGSQIQSLKSDVDELKAKIEMLTKNESLLTQALNQ. Disordered regions lie at residues 168-212 and 778-849; these read NHAS…ASPI and QQYP…PFIL. Residues 171–184 are compositionally biased toward low complexity; it reads SQQQQSSGSQSQQQ. The span at 191–212 shows a compositional bias: polar residues; that stretch reads RALSYTSANSSPQVAFSNASPI. A compositionally biased stretch (low complexity) spans 778 to 827; sequence QQYPMQQDQQQQEPSQQQQQKHSQQSQQYQQQQQSNQQQPHLQHQRQFQQ.

Interacts with SSN3 and SFU1. In terms of processing, phosphorylated by SSN3 under iron-depleted conditions which leads to nuclear localization.

Its subcellular location is the cytoplasm. The protein resides in the nucleus. Functionally, transcription factor which plays an essential role in virulence by activating the transcription of iron uptake genes such as FRE7 in iron-poor environments such as the host bloodstream and internal organs. Promotes commensalism in a mouse model of gastrointestinal infection. This Candida albicans (strain SC5314 / ATCC MYA-2876) (Yeast) protein is Transcriptional regulatory protein SEF1 (SEF1).